We begin with the raw amino-acid sequence, 613 residues long: Portal protein (613 aa).

The interval 577–613 (ATGGDHGIRQAPSARGDAEPDHAKSKPARDPPPGAGS) is disordered. The span at 592–605 (GDAEPDHAKSKPAR) shows a compositional bias: basic and acidic residues.

This sequence belongs to the herpesviridae portal protein family. As to quaternary structure, homododecamerizes. Interacts with terminase subunits TRM1 and TRM3.

The protein localises to the virion. The protein resides in the host nucleus. Forms a portal in the viral capsid through which viral DNA is translocated during DNA packaging. Assembles as a dodecamer at a single fivefold axe of the T=16 icosahedric capsid. Binds to the molecular motor that translocates the viral DNA, termed terminase. The chain is Portal protein from Homo sapiens (Human).